The primary structure comprises 252 residues: tRNA pseudouridine synthase A (252 aa).

D52 functions as the Nucleophile in the catalytic mechanism. Y110 contributes to the substrate binding site.

It belongs to the tRNA pseudouridine synthase TruA family. Homodimer.

The enzyme catalyses uridine(38/39/40) in tRNA = pseudouridine(38/39/40) in tRNA. Its function is as follows. Formation of pseudouridine at positions 38, 39 and 40 in the anticodon stem and loop of transfer RNAs. This Blochmanniella floridana protein is tRNA pseudouridine synthase A.